The sequence spans 363 residues: tRNA N6-adenosine threonylcarbamoyltransferase (363 aa).

Residues H127 and H131 each contribute to the Fe cation site. Residues 150–154, D183, G196, and N290 contribute to the substrate site; that span reads LISGG. Residue D318 coordinates Fe cation.

The protein belongs to the KAE1 / TsaD family. Fe(2+) serves as cofactor.

The protein localises to the cytoplasm. The catalysed reaction is L-threonylcarbamoyladenylate + adenosine(37) in tRNA = N(6)-L-threonylcarbamoyladenosine(37) in tRNA + AMP + H(+). Its function is as follows. Required for the formation of a threonylcarbamoyl group on adenosine at position 37 (t(6)A37) in tRNAs that read codons beginning with adenine. Is involved in the transfer of the threonylcarbamoyl moiety of threonylcarbamoyl-AMP (TC-AMP) to the N6 group of A37, together with TsaE and TsaB. TsaD likely plays a direct catalytic role in this reaction. The polypeptide is tRNA N6-adenosine threonylcarbamoyltransferase (Zymomonas mobilis subsp. mobilis (strain ATCC 31821 / ZM4 / CP4)).